The sequence spans 77 residues: Tautomerase PptA (77 aa).

The Proton acceptor; via imino nitrogen role is filled by proline 2.

It belongs to the 4-oxalocrotonate tautomerase family. PptA subfamily. Homodimer.

The protein localises to the cytoplasm. The polypeptide is Tautomerase PptA (Escherichia coli (strain K12 / MC4100 / BW2952)).